Here is a 252-residue protein sequence, read N- to C-terminus: D-aminoacyl-tRNA deacylase (252 aa).

Belongs to the DtdA deacylase family. Monomer. Zn(2+) is required as a cofactor.

It carries out the reaction a D-aminoacyl-tRNA + H2O = a tRNA + a D-alpha-amino acid + H(+). It catalyses the reaction glycyl-tRNA(Ala) + H2O = tRNA(Ala) + glycine + H(+). In terms of biological role, D-aminoacyl-tRNA deacylase with broad substrate specificity. By recycling D-aminoacyl-tRNA to D-amino acids and free tRNA molecules, this enzyme counteracts the toxicity associated with the formation of D-aminoacyl-tRNA entities in vivo. This chain is D-aminoacyl-tRNA deacylase, found in Pyrobaculum arsenaticum (strain DSM 13514 / JCM 11321 / PZ6).